The chain runs to 101 residues: Apolipoprotein C-II (101 aa).

The N-terminal stretch at 1–22 (MGTRCLLVLLLVLLVLRCDVQG) is a signal peptide. Residues 23–28 (DDMARQ) constitute a propeptide, removed in mature form. The tract at residues 66-74 (AVDEKIRDM) is lipid binding. A lipoprotein lipase cofactor region spans residues 78 to 101 (STAAVRIYTGILTDQILSMLSGDS).

It belongs to the apolipoprotein C2 family. Proapolipoprotein C-II is synthesized as a sialic acid containing glycoprotein which is subsequently desialylated prior to its proteolytic processing. In terms of processing, proapolipoprotein C-II, the major form found in plasma undergoes proteolytic cleavage of its N-terminal hexapeptide to generate the mature form apolipoprotein C-II, which occurs as the minor form in plasma.

Its subcellular location is the secreted. Its function is as follows. Component of chylomicrons, very low-density lipoproteins (VLDL), low-density lipoproteins (LDL), and high-density lipoproteins (HDL) in plasma. Plays an important role in lipoprotein metabolism as an activator of lipoprotein lipase, the enzyme which hydrolyzes the triacylglycerols on chylomicrons and VLDL. The sequence is that of Apolipoprotein C-II (APOC2) from Acinonyx jubatus (Cheetah).